The following is a 490-amino-acid chain: ATP-dependent 6-phosphofructokinase (490 aa).

Residues Gly-109, 175–176, and 200–203 contribute to the ATP site; these read RG and GDGT. Asp-201 contributes to the Mg(2+) binding site. Residues 229–231, 274–276, Glu-327, and 383–386 each bind substrate; these read TID, MGR, and YMIR. The active-site Proton acceptor is the Asp-231. Positions 488–490 match the Peroxisomal targeting signal motif; sequence SKL.

It belongs to the phosphofructokinase type A (PFKA) family. PPi-dependent PFK group II subfamily. Atypical ATP-dependent clade 'X' sub-subfamily. In terms of assembly, homotetramer. Mg(2+) is required as a cofactor.

The protein resides in the glycosome. The catalysed reaction is beta-D-fructose 6-phosphate + ATP = beta-D-fructose 1,6-bisphosphate + ADP + H(+). The protein operates within carbohydrate degradation; glycolysis; D-glyceraldehyde 3-phosphate and glycerone phosphate from D-glucose: step 3/4. With respect to regulation, allosterically activated by AMP. Functionally, catalyzes the phosphorylation of D-fructose 6-phosphate to fructose 1,6-bisphosphate by ATP, the first committing step of glycolysis. The polypeptide is ATP-dependent 6-phosphofructokinase (Trypanoplasma borreli).